Reading from the N-terminus, the 702-residue chain is Archaeal Lon protease (702 aa).

The interval 1 to 63 is disordered; that stretch reads MSNESTNDAP…VGVEGDVSID (63 aa). The Cytoplasmic segment spans residues 1-183; the sequence is MSNESTNDAP…EARKRNQMRS (183 aa). A compositionally biased stretch (acidic residues) spans 10 to 48; the sequence is PPDDDPDDPEPSVDHDDTDGLQDDPADSVDDAGEVDDLE. Residue 117–124 participates in ATP binding; it reads GSPGTGKS. Residues 184–201 traverse the membrane as a helical segment; sequence FLMWIMILLAVGYALLIA. The Extracellular portion of the chain corresponds to 202-206; it reads TPARP. The chain crosses the membrane as a helical span at residues 207 to 223; the sequence is LLALLSAAGIYLLFRYT. Residues 224–702 are Cytoplasmic-facing; that stretch reads NRGSDAMVPK…GTTGGNPSPQ (479 aa). Residues 487 to 667 form the Lon proteolytic domain; that stretch reads EEAVGRVNGL…SEVLDVALVG (181 aa). Catalysis depends on residues serine 574 and lysine 617.

It belongs to the peptidase S16 family. Archaeal LonB subfamily. As to quaternary structure, homohexamer. Organized in a ring with a central cavity.

Its subcellular location is the cell membrane. In terms of biological role, ATP-dependent serine protease that mediates the selective degradation of mutant and abnormal proteins as well as certain short-lived regulatory proteins. Degrades polypeptides processively. The chain is Archaeal Lon protease from Halobacterium salinarum (strain ATCC 700922 / JCM 11081 / NRC-1) (Halobacterium halobium).